The primary structure comprises 405 residues: Pyruvate decarboxylase 2 (405 aa).

Residues 232–314 (DSWFNCQKLK…FLINNGGYTI (83 aa)) form a thiamine pyrophosphate binding region. Positions 282, 309, and 311 each coordinate Mg(2+). Glu-315 contributes to the substrate binding site.

This sequence belongs to the TPP enzyme family. Homotetramer. It depends on a metal cation as a cofactor. The cofactor is thiamine diphosphate.

It carries out the reaction a 2-oxocarboxylate + H(+) = an aldehyde + CO2. The polypeptide is Pyruvate decarboxylase 2 (PDC2) (Pisum sativum (Garden pea)).